The following is a 173-amino-acid chain: Translation initiation factor IF-3 (173 aa).

Belongs to the IF-3 family. As to quaternary structure, monomer.

Its subcellular location is the cytoplasm. Functionally, IF-3 binds to the 30S ribosomal subunit and shifts the equilibrium between 70S ribosomes and their 50S and 30S subunits in favor of the free subunits, thus enhancing the availability of 30S subunits on which protein synthesis initiation begins. The chain is Translation initiation factor IF-3 from Bacillus subtilis (strain 168).